The sequence spans 298 residues: Lipoyl synthase (298 aa).

[4Fe-4S] cluster is bound by residues cysteine 40, cysteine 45, cysteine 51, cysteine 67, cysteine 71, cysteine 74, and serine 280. The Radical SAM core domain maps to 53-269 (AVRKTATFMI…KEIALSKGFS (217 aa)).

It belongs to the radical SAM superfamily. Lipoyl synthase family. [4Fe-4S] cluster is required as a cofactor.

It is found in the cytoplasm. It catalyses the reaction [[Fe-S] cluster scaffold protein carrying a second [4Fe-4S](2+) cluster] + N(6)-octanoyl-L-lysyl-[protein] + 2 oxidized [2Fe-2S]-[ferredoxin] + 2 S-adenosyl-L-methionine + 4 H(+) = [[Fe-S] cluster scaffold protein] + N(6)-[(R)-dihydrolipoyl]-L-lysyl-[protein] + 4 Fe(3+) + 2 hydrogen sulfide + 2 5'-deoxyadenosine + 2 L-methionine + 2 reduced [2Fe-2S]-[ferredoxin]. Its pathway is protein modification; protein lipoylation via endogenous pathway; protein N(6)-(lipoyl)lysine from octanoyl-[acyl-carrier-protein]. Functionally, catalyzes the radical-mediated insertion of two sulfur atoms into the C-6 and C-8 positions of the octanoyl moiety bound to the lipoyl domains of lipoate-dependent enzymes, thereby converting the octanoylated domains into lipoylated derivatives. The polypeptide is Lipoyl synthase (Bacillus cytotoxicus (strain DSM 22905 / CIP 110041 / 391-98 / NVH 391-98)).